The sequence spans 308 residues: tRNA uridine(34) hydroxylase (308 aa).

One can recognise a Rhodanese domain in the interval 129–223 (QEKDVLILDA…YGKHPETQGV (95 aa)). Catalysis depends on cysteine 183, which acts as the Cysteine persulfide intermediate.

This sequence belongs to the TrhO family.

It catalyses the reaction uridine(34) in tRNA + AH2 + O2 = 5-hydroxyuridine(34) in tRNA + A + H2O. Its function is as follows. Catalyzes oxygen-dependent 5-hydroxyuridine (ho5U) modification at position 34 in tRNAs. The sequence is that of tRNA uridine(34) hydroxylase from Aster yellows witches'-broom phytoplasma (strain AYWB).